Reading from the N-terminus, the 427-residue chain is Membrane-bound hydrogenase subunit alpha (427 aa).

4 residues coordinate Ni(2+): Cys68, Cys71, Cys374, and Cys377.

It belongs to the complex I 49 kDa subunit family. As to quaternary structure, the membrane-bound hydrogenase complex is composed of MbhK and MbhL, and may also contain MbhJ. Ni(2+) serves as cofactor.

Its subcellular location is the cell membrane. It carries out the reaction H2 + 2 oxidized [2Fe-2S]-[ferredoxin] = 2 reduced [2Fe-2S]-[ferredoxin] + 2 H(+). Inhibited by 0.1 mM Cu(2+). Alpha subunit of a hydrogen-evolving hydrogenase that utilizes protons both as a substrate for hydrogen production and proton translocation. Acts by coupling the redox reaction via ferredoxin and iron-sulfur (Fe-S) clusters to proton translocation across the membrane thereby conserving the redox energy in a proton gradient. This chain is Membrane-bound hydrogenase subunit alpha, found in Pyrococcus furiosus (strain ATCC 43587 / DSM 3638 / JCM 8422 / Vc1).